We begin with the raw amino-acid sequence, 348 residues long: Glucan endo-1,3-beta-glucosidase, basic isoform (348 aa).

Glutamine 1 bears the Pyrrolidone carboxylic acid mark. Glutamate 95 acts as the Proton donor in catalysis. The Nucleophile role is filled by glutamate 240. A propeptide spans 317–348 (AQRMQRLLLMSSMQHIPLRVTCKLEPSSQSLL) (removed in mature form).

Belongs to the glycosyl hydrolase 17 family.

It localises to the vacuole. The enzyme catalyses Hydrolysis of (1-&gt;3)-beta-D-glucosidic linkages in (1-&gt;3)-beta-D-glucans.. In terms of biological role, implicated in the defense of plants against pathogens. The polypeptide is Glucan endo-1,3-beta-glucosidase, basic isoform (Phaseolus vulgaris (Kidney bean)).